A 456-amino-acid chain; its full sequence is Cysteine--tRNA ligase (456 aa).

Cys29 contacts Zn(2+). The short motif at 31–41 (PTVYDYAHVGN) is the 'HIGH' region element. Residues Cys209, His234, and Glu238 each coordinate Zn(2+). Residues 267-271 (KMSKS) carry the 'KMSKS' region motif. Lys270 is an ATP binding site.

Belongs to the class-I aminoacyl-tRNA synthetase family. In terms of assembly, monomer. The cofactor is Zn(2+).

It localises to the cytoplasm. The catalysed reaction is tRNA(Cys) + L-cysteine + ATP = L-cysteinyl-tRNA(Cys) + AMP + diphosphate. This is Cysteine--tRNA ligase from Rhodospirillum centenum (strain ATCC 51521 / SW).